Consider the following 114-residue polypeptide: Ribonuclease P protein component (114 aa).

Belongs to the RnpA family. As to quaternary structure, consists of a catalytic RNA component (M1 or rnpB) and a protein subunit.

It catalyses the reaction Endonucleolytic cleavage of RNA, removing 5'-extranucleotides from tRNA precursor.. Functionally, RNaseP catalyzes the removal of the 5'-leader sequence from pre-tRNA to produce the mature 5'-terminus. It can also cleave other RNA substrates such as 4.5S RNA. The protein component plays an auxiliary but essential role in vivo by binding to the 5'-leader sequence and broadening the substrate specificity of the ribozyme. This is Ribonuclease P protein component from Buchnera aphidicola subsp. Schizaphis graminum (strain Sg).